The sequence spans 273 residues: Rhamnulose-1-phosphate aldolase (273 aa).

Glu117 is a catalytic residue. Residues His140, His142, and His211 each coordinate Zn(2+).

Belongs to the aldolase class II family. RhaD subfamily. It depends on Zn(2+) as a cofactor.

Its subcellular location is the cytoplasm. The enzyme catalyses L-rhamnulose 1-phosphate = (S)-lactaldehyde + dihydroxyacetone phosphate. It participates in carbohydrate degradation; L-rhamnose degradation; glycerone phosphate from L-rhamnose: step 3/3. Functionally, catalyzes the reversible cleavage of L-rhamnulose-1-phosphate to dihydroxyacetone phosphate (DHAP) and L-lactaldehyde. This is Rhamnulose-1-phosphate aldolase from Listeria monocytogenes serovar 1/2a (strain ATCC BAA-679 / EGD-e).